Reading from the N-terminus, the 303-residue chain is Glycine--tRNA ligase alpha subunit (303 aa).

Belongs to the class-II aminoacyl-tRNA synthetase family. Tetramer of two alpha and two beta subunits.

The protein resides in the cytoplasm. The enzyme catalyses tRNA(Gly) + glycine + ATP = glycyl-tRNA(Gly) + AMP + diphosphate. The polypeptide is Glycine--tRNA ligase alpha subunit (Klebsiella pneumoniae subsp. pneumoniae (strain ATCC 700721 / MGH 78578)).